Consider the following 663-residue polypeptide: Nucleolar complex-associated protein 3 (663 aa).

Positions 1 to 132 (MAKRNRSQFR…AKEDEPDTEE (132 aa)) are disordered. The span at 82–97 (GKVERKLHKAQEKPKD) shows a compositional bias: basic and acidic residues. Acidic residues predominate over residues 98–130 (DDEEDEDSNDSSEDDEGPNEEQEAEAKEDEPDT). A coiled-coil region spans residues 363-408 (KKDRVHLSKKQRKARKEMQQIEEEMRNAEQAVSAEERERNQSEILK). Position 395 is a phosphoserine (serine 395).

This sequence belongs to the CBF/MAK21 family. As to quaternary structure, forms a heterodimer with NOC2. This complex may be associated with pre-ribosomal particles. Also interacts with MCM2, MCM5 and ORC1.

Its subcellular location is the nucleus. The protein resides in the nucleolus. Its function is as follows. Required for synthesis of 60S ribosomal subunits and the transport of pre-ribosomes from the nucleoplasm to the cytoplasm. Also required for initiation of DNA replication. May function downstream of the origin recognition complex (ORC complex) in the loading of CDC6 and the minichromosome maintenance complex (MCM complex) onto chromatin during the G1 phase of the cell cycle. Essential for growth. The protein is Nucleolar complex-associated protein 3 (NOC3) of Saccharomyces cerevisiae (strain ATCC 204508 / S288c) (Baker's yeast).